The primary structure comprises 133 residues: Exonuclease VapC9 (133 aa).

One can recognise a PINc domain in the interval 5 to 113 (YLVDASALYA…LVLVTQDREL (109 aa)). Mg(2+)-binding residues include aspartate 8, aspartate 92, and aspartate 110.

It belongs to the PINc/VapC protein family. As to quaternary structure, homodimer, 2 of which then form a homotetramer. Mg(2+) serves as cofactor.

Its activity is regulated as follows. Inhibited by EDTA. Its function is as follows. Toxic component of a type II toxin-antitoxin (TA) system. Functionally, has ribonuclease activity. Has a slow ssDNA exonuclease activity. This Pyrobaculum aerophilum (strain ATCC 51768 / DSM 7523 / JCM 9630 / CIP 104966 / NBRC 100827 / IM2) protein is Exonuclease VapC9.